We begin with the raw amino-acid sequence, 496 residues long: MRTNPTTSSPVVSTLEEKNLGRIAQIIGPVLDVVFPPGKMPNIYNALVVKGRDTVQINVTCEVQQLLGNNRVRAVAMSATDGLMRGMEVIDTGAPLSVPVGGATLGRIFNVLGEPVDNLGPVDTRTTSPIHRSAPAFIQLDTKFSIFETGIKVVDLLAPYRRGGKIGLFGGAGVGKTVLIMELINNIAKAHGGVSVFGGVGERTREGNDLYMEMKESGVINEKNIAESKVALVYGQMNEPPGARMRVGLTALTMAEYFRDVNEQDVLLFIDNIFRFVQAGSEVSALLGRMPSAVGYQPTLSTEMGSLQERITSTKEGSITSIQAVYVPADDLTDPAPATTFAHLDATTVLSRVLAAKGIYPAVDPLDSTSTMLQPRIVGEEHYETAQRVKQTSQRYKELQDIIAILGLDELSEEDRLTVARARKIERFLSQPFFVAEVFTGSPGKYVGLGETIRGFQLILSGELDGLPEQAFYLVGNIDEATAKAMNLEVESKLKK.

Residue 170–177 (GGAGVGKT) participates in ATP binding.

It belongs to the ATPase alpha/beta chains family. F-type ATPases have 2 components, CF(1) - the catalytic core - and CF(0) - the membrane proton channel. CF(1) has five subunits: alpha(3), beta(3), gamma(1), delta(1), epsilon(1). CF(0) has four main subunits: a(1), b(1), b'(1) and c(9-12).

It is found in the plastid. The protein localises to the chloroplast thylakoid membrane. The enzyme catalyses ATP + H2O + 4 H(+)(in) = ADP + phosphate + 5 H(+)(out). In terms of biological role, produces ATP from ADP in the presence of a proton gradient across the membrane. The catalytic sites are hosted primarily by the beta subunits. The sequence is that of ATP synthase subunit beta, chloroplastic from Trachycarpus fortunei (Chinese windmill palm).